Consider the following 145-residue polypeptide: uncharacterized protein (145 aa).

The signal sequence occupies residues 1–26; that stretch reads MAILLPLKSILPWCCITFSFLLSSSG.

This is an uncharacterized protein from Saccharomyces cerevisiae (strain ATCC 204508 / S288c) (Baker's yeast).